Reading from the N-terminus, the 120-residue chain is MVKLTSIAAGVAAIAATASATTTLAQSDERVNLVELGVYVSDIRAHLAQYYMFQAAHPTETYPVEVAEAVFNYGDFTTMLTGIAPDQVTRMITGVPWYSTRLKPAISKALSKDGIYTIAN.

A signal peptide spans 1–20 (MVKLTSIAAGVAAIAATASA).

Belongs to the SRP1/TIP1 family. Seripauperin subfamily.

This chain is Seripauperin-6 (PAU6), found in Saccharomyces cerevisiae (strain ATCC 204508 / S288c) (Baker's yeast).